The sequence spans 590 residues: G protein-coupled receptor kinase 5 (590 aa).

Residues 1 to 185 (MELENIVANT…LERQPVTKNT (185 aa)) are N-terminal. Positions 20–39 (GGKRKGKSKKWKEILKFPHI) are interaction with calmodulin. The RGS domain occupies 53–171 (YCSLCDKQPV…LDSMYFDRFL (119 aa)). In terms of domain architecture, Protein kinase spans 186–448 (FRQYRVLGKG…AAEVKRHPFF (263 aa)). ATP-binding positions include 192-200 (LGKGGFGEV) and Lys215. Residue Asp311 is the Proton acceptor of the active site. Residues 388 to 395 (RKEKVKRE) carry the Nuclear localization signal motif. The region spanning 449–514 (RNMNFKRLEA…GSVPIPWQSE (66 aa)) is the AGC-kinase C-terminal domain. Ser484 carries the post-translational modification Phosphoserine; by autocatalysis. Phosphothreonine; by autocatalysis is present on Thr485. A sufficient for membrane localization region spans residues 546–565 (PKKGLLQRLFKRQHQNNSKS). The segment at 554–590 (LFKRQHQNNSKSSPNSKTSFNHHINSNHVSSNSTGSS) is disordered. Positions 561-590 (NNSKSSPNSKTSFNHHINSNHVSSNSTGSS) are enriched in low complexity. Ser579 is subject to Phosphoserine.

It belongs to the protein kinase superfamily. AGC Ser/Thr protein kinase family. GPRK subfamily. Interacts with ST13 (via the C-terminus 303-319 AA). Interacts with TP53/p53. Interacts with HTR4 (via C-terminus 330-346 AA); this interaction is promoted by 5-HT (serotonin). Interacts with HDAC5. Interacts with GIT1. Post-translationally, autophosphorylated. Autophosphorylation may play a critical role in the regulation of GRK5 kinase activity. In terms of tissue distribution, highest levels in lung, heart, retina, lingual epithelium. Very little in brain, liver, kidney.

Its subcellular location is the cytoplasm. It localises to the nucleus. The protein resides in the cell membrane. The catalysed reaction is [G-protein-coupled receptor] + ATP = [G-protein-coupled receptor]-phosphate + ADP + H(+). Inhibited by calmodulin with an IC(50) of 50 nM. Calmodulin inhibits GRK5 association with receptor and phospholipid. Functionally, serine/threonine kinase that phosphorylates preferentially the activated forms of a variety of G-protein-coupled receptors (GPCRs). Such receptor phosphorylation initiates beta-arrestin-mediated receptor desensitization, internalization, and signaling events leading to their down-regulation. Phosphorylates a variety of GPCRs, including adrenergic receptors (Beta-2 adrenergic receptor), muscarinic acetylcholine receptors (more specifically Gi-coupled M2/M4 subtypes), dopamine receptors and opioid receptors. In addition to GPCRs, also phosphorylates various substrates: Hsc70-interacting protein/ST13, TP53/p53, HDAC5, and arrestin-1/ARRB1. Phosphorylation of ARRB1 by GRK5 inhibits G-protein independent MAPK1/MAPK3 signaling downstream of 5HT4-receptors. Phosphorylation of HDAC5, a repressor of myocyte enhancer factor 2 (MEF2) leading to nuclear export of HDAC5 and allowing MEF2-mediated transcription. Phosphorylation of TP53/p53, a crucial tumor suppressor, inhibits TP53/p53-mediated apoptosis. Phosphorylation of ST13 regulates internalization of the chemokine receptor. Phosphorylates rhodopsin (RHO) (in vitro) and a non G-protein-coupled receptor, LRP6 during Wnt signaling (in vitro). The chain is G protein-coupled receptor kinase 5 (GRK5) from Bos taurus (Bovine).